The sequence spans 449 residues: Adenylosuccinate lyase (449 aa).

N(6)-(1,2-dicarboxyethyl)-AMP contacts are provided by residues 9–10 (RY), 75–77 (KHD), and 102–103 (TS). His150 (proton donor/acceptor) is an active-site residue. Residue Gln224 participates in N(6)-(1,2-dicarboxyethyl)-AMP binding. The active-site Proton donor/acceptor is the Ser275. N(6)-(1,2-dicarboxyethyl)-AMP-binding positions include Ser276, 281–283 (KMN), and 320–324 (SSERI).

Belongs to the lyase 1 family. Adenylosuccinate lyase subfamily. Homotetramer. Residues from neighboring subunits contribute catalytic and substrate-binding residues to each active site.

The enzyme catalyses N(6)-(1,2-dicarboxyethyl)-AMP = fumarate + AMP. It catalyses the reaction (2S)-2-[5-amino-1-(5-phospho-beta-D-ribosyl)imidazole-4-carboxamido]succinate = 5-amino-1-(5-phospho-beta-D-ribosyl)imidazole-4-carboxamide + fumarate. It participates in purine metabolism; AMP biosynthesis via de novo pathway; AMP from IMP: step 2/2. The protein operates within purine metabolism; IMP biosynthesis via de novo pathway; 5-amino-1-(5-phospho-D-ribosyl)imidazole-4-carboxamide from 5-amino-1-(5-phospho-D-ribosyl)imidazole-4-carboxylate: step 2/2. Catalyzes two reactions in de novo purine nucleotide biosynthesis. Catalyzes the breakdown of 5-aminoimidazole- (N-succinylocarboxamide) ribotide (SAICAR or 2-[5-amino-1-(5-phospho-beta-D-ribosyl)imidazole-4-carboxamido]succinate) to 5-aminoimidazole-4-carboxamide ribotide (AICAR or 5-amino-1-(5-phospho-beta-D-ribosyl)imidazole-4-carboxamide) and fumarate, and of adenylosuccinate (ADS or N(6)-(1,2-dicarboxyethyl)-AMP) to adenosine monophosphate (AMP) and fumarate. The chain is Adenylosuccinate lyase (purB) from Methanothermobacter thermautotrophicus (strain ATCC 29096 / DSM 1053 / JCM 10044 / NBRC 100330 / Delta H) (Methanobacterium thermoautotrophicum).